Here is a 396-residue protein sequence, read N- to C-terminus: Methionine import ATP-binding protein MetN 2 (396 aa).

Residues 41-280 (VSFELVGKVF…PRHGATRALL (240 aa)) enclose the ABC transporter domain. 77–84 (GRSGAGKS) is an ATP binding site.

This sequence belongs to the ABC transporter superfamily. Methionine importer (TC 3.A.1.24) family. As to quaternary structure, the complex is composed of two ATP-binding proteins (MetN), two transmembrane proteins (MetI) and a solute-binding protein (MetQ).

It is found in the cell inner membrane. It carries out the reaction L-methionine(out) + ATP + H2O = L-methionine(in) + ADP + phosphate + H(+). It catalyses the reaction D-methionine(out) + ATP + H2O = D-methionine(in) + ADP + phosphate + H(+). Functionally, part of the ABC transporter complex MetNIQ involved in methionine import. Responsible for energy coupling to the transport system. The sequence is that of Methionine import ATP-binding protein MetN 2 from Burkholderia pseudomallei (strain 1710b).